The following is a 909-amino-acid chain: Glucan endo-1,3-beta-D-glucosidase ARB_01444 (909 aa).

Residues 1–23 (MKPYTTLPGVAVLVSLLTQSAHA) form the signal peptide. The tract at residues 136–187 (KRSPAPQRHPPAPTKATAGYQFTNCTSTSNPGPTATSPTSGIPSQPSAPPAT) is disordered. A compositionally biased stretch (polar residues) spans 155–180 (YQFTNCTSTSNPGPTATSPTSGIPSQ). Residues Asn-159, Asn-239, and Asn-259 are each glycosylated (N-linked (GlcNAc...) asparagine). The interval 191–430 (QDIFQPIAKD…KGVIQVAKNP (240 aa)) is beta-sandwich subdomain. The GH81 domain occupies 191-909 (QDIFQPIAKD…AGEYSTYIAL (719 aa)). Positions 431–524 (SAEEGEGIYD…GDSWTMVEGN (94 aa)) are alpha/beta subdomain. Residues 539-909 (SSQVTLSEGA…AGEYSTYIAL (371 aa)) are (alpha/beta)6 barrel subdomain. Asp-654 is a catalytic residue. His-658, Asp-727, Glu-729, and Glu-733 together coordinate (1,3-beta-D-glucosyl)n. Active-site residues include Glu-729 and Glu-733. Positions 798-800 (KID) are may provide specificity for triple-helical beta-glucan. Tyr-811 lines the (1,3-beta-D-glucosyl)n pocket.

It belongs to the glycosyl hydrolase 81 family.

It localises to the secreted. The protein localises to the cell wall. The enzyme catalyses Hydrolysis of (1-&gt;3)-beta-D-glucosidic linkages in (1-&gt;3)-beta-D-glucans.. Functionally, cleaves internal linkages in 1,3-beta-glucan. Probably involved in cell separation after cytokinesis. This Arthroderma benhamiae (strain ATCC MYA-4681 / CBS 112371) (Trichophyton mentagrophytes) protein is Glucan endo-1,3-beta-D-glucosidase ARB_01444.